The chain runs to 549 residues: Leucine-rich repeat, immunoglobulin-like domain and transmembrane domain-containing protein 2 (549 aa).

Residues 1–22 (MAFVFYCFLQVLVSWVIHAVQP) form the signal peptide. Positions 23–54 (FCLPECTCSEESFGRSLQCMSMSLGKIPDNFP) constitute an LRRNT domain. LRR repeat units follow at residues 80–103 (SLEY…EDLP), 104–125 (ELRE…AFRA), 128–149 (LLRV…ALQF), and 152–173 (NLIY…VFLN). Asparagine 90 is a glycosylation site (N-linked (GlcNAc...) asparagine). Residues 200-252 (NPWLCDCRLRGLAQFVKSVGPPFILVNSYLVCQGPVSKAGQLLHETELGVCMK) enclose the LRRCT domain. The region spanning 253-339 (PTISTPSVNV…FNSIGRSSLV (87 aa)) is the Ig-like domain. Asparagine 261 carries N-linked (GlcNAc...) asparagine glycosylation. A disulfide bridge links cysteine 274 with cysteine 327. Positions 361–447 (EVSAYVDLRV…QPPSQGQCVV (87 aa)) constitute a Fibronectin type-III domain. A helical membrane pass occupies residues 463–483 (LLHVTVVLCAVLLALPVGAYV). Residue asparagine 491 is glycosylated (N-linked (GlcNAc...) asparagine). The segment at 521–549 (FKDPSGVYEDGESHRVMEEDEEVEKEGIS) is disordered. The span at 538–549 (EEDEEVEKEGIS) shows a compositional bias: acidic residues.

As to quaternary structure, interacts with LRIT1; may form a heterodimer with LRIT1.

It is found in the membrane. The protein is Leucine-rich repeat, immunoglobulin-like domain and transmembrane domain-containing protein 2 (Lrit2) of Mus musculus (Mouse).